The following is a 1395-amino-acid chain: MATQVLIAHSGQRLQIDTSRLTTLDEFRSAVSRSTSIPQNCIIALVPPGKALRPQAIQMEKEIFVYDSRMTQTGAPGSPFPVKLEIDLPKPYAITNPPNDIIDTRSLESWQDLFRERRVWAHRLSEDCEGMEKEAHDQYEAMDNMLSCLDAAVANLESVVRATENKYEDLKKWAATEQTGYNDLVTRWEQNLGLARSIPISAAMVRLMTGKDVTGAKGRPSKQATLEDLVDLDCARKEGRRAPTVLRKFNARIADLEKAEGRLMQNFEELEAEFRRVISRSVMGHSQDATQLLQDIQALAGKVENDYRTTMDYSTSTRDLLQASKIAQTHTEKHLPSLHKRALEMDGMLRYAIKARNALALEQAEFMRSIADVSKLDMQVKSLINAIAEDEELATFDYLRLIHQVPYMYAAFTAEAIRRKEWFDKVKTDSTTLANEMALFQDEEAKRRRKWYKTIGDTSYGPESLSTDNNVPGLEVNLLGEDELWPSTSRKDLEEFLDLLQRQRADASIIGDVGKIIAELSNPTKQQFKRLKAFKNGSVHDSALGRSGLMIRGDDELLRSLQDDKTKLETKLRTAESRVRRLEDLLHRQGQASRPTLGNLFQNPSQQLPERSGSAQSVGSPGPIGDRRQSDEVGNQLVQRVAQLEKELQEEKERNAALERDAADRTTHTNDIKAQMDDVNATKKDLLENMEAQKREFLVERKALDEEIRNLKARLEETEDEFHNIDESREHEKTSYDEKVQLLEAQLESLTKEKSDDALKAQGQVDFLRNETRLQRESNEALQAQIQASQDELGLLNKKLKTTNEAADVQLRALRELYTTFVKSAGIPEDVNDLADTVLNNAAETLAKVQNLDADISIMRSNLALAQDVAKDLRAQQANALEKLAKEETTSMHLREQCDEHKAKVNALEGELADGRKQLDELRTQIAQGETGSESLRTRLEEEEKKIVRLTEDLASKQSQVGSLEEELRLFQERLQDSQSKLTTLTLRTETRNERTKDISQRLYSQNERLVRLLERLGFSVSRENGVMTIQKIPRAERSTMNLAASSTADAKSRIASEPADVELLYWMNATDVQGETEKYDKFMSTLGSFDVDAFADTVYRRVKDVEHIARKLQRDVRGYREKTHALHKDAHDKIAFRNFKEGDLALFLPTRNQTNGAWAAFNIGFPHYFLREQEHHRLSNREWLVARITRVQEKVVDLSKSLDTTESINGTSGGAEDDNDNPFDLSDGLRWYLIDAQEDKPGAPSTPGLGKTTVASTKVEAKGDMQTQPRSTPGGLAVLGGAKPSAVDGASKSLSKSLESRRSSTSSTRRPLPFAGALSRNAPGSETNSLRAVATTAPGDGAGSPSGPTSPKPHLAHGEDQDVRLAALPEPQQQRVEVRNDSGGGAIDSLLGPT.

Coiled-coil stretches lie at residues 123 to 172 (RLSE…DLKK), 246 to 277 (LRKFNARIADLEKAEGRLMQNFEELEAEFRRV), 555 to 591 (DELLRSLQDDKTKLETKLRTAESRVRRLEDLLHRQGQ), 629 to 818 (QSDE…RELY), and 862 to 986 (NLAL…TTLT). Disordered stretches follow at residues 586–632 (LHRQ…QSDE) and 647–673 (ELQEEKERNAALERDAADRTTHTNDIK). A compositionally biased stretch (polar residues) spans 590-619 (GQASRPTLGNLFQNPSQQLPERSGSAQSVG). Residues 1260 to 1395 (VEAKGDMQTQ…GAIDSLLGPT (136 aa)) form a disordered region. Composition is skewed to low complexity over residues 1292-1311 (SKSLSKSLESRRSSTSSTRR) and 1337-1350 (TAPGDGAGSPSGPT).

The protein belongs to the ATG11 family. As to quaternary structure, homodimer.

It localises to the preautophagosomal structure membrane. It is found in the vacuole membrane. Functionally, involved in cytoplasm to vacuole transport (Cvt), pexophagy, mitophagy and nucleophagy. Recruits mitochondria for their selective degradation via autophagy (mitophagy) during starvation. Works as scaffold proteins that recruit ATG proteins to the pre-autophagosome (PAS), the site of vesicle/autophagosome formation. Required for the Cvt vesicles completion. The chain is Autophagy-related protein 11 (ATG11) from Pyricularia oryzae (strain 70-15 / ATCC MYA-4617 / FGSC 8958) (Rice blast fungus).